A 235-amino-acid polypeptide reads, in one-letter code: Thiopurine S-methyltransferase (235 aa).

4 residues coordinate S-adenosyl-L-methionine: W13, L48, E69, and R126. Positions 199-235 (PDPQNGAPRRVEHKVYQLTGKRPASPEADGRAAETED) are disordered. The span at 226-235 (ADGRAAETED) shows a compositional bias: basic and acidic residues.

It belongs to the class I-like SAM-binding methyltransferase superfamily. TPMT family.

Its subcellular location is the cytoplasm. The catalysed reaction is S-adenosyl-L-methionine + a thiopurine = S-adenosyl-L-homocysteine + a thiopurine S-methylether.. This chain is Thiopurine S-methyltransferase, found in Stutzerimonas stutzeri (strain A1501) (Pseudomonas stutzeri).